Consider the following 212-residue polypeptide: Ribonuclease HII (212 aa).

The RNase H type-2 domain occupies Thr20–Ser209. The a divalent metal cation site is built by Asp26, Glu27, and Asp117.

It belongs to the RNase HII family. Mn(2+) serves as cofactor. Mg(2+) is required as a cofactor.

It is found in the cytoplasm. The catalysed reaction is Endonucleolytic cleavage to 5'-phosphomonoester.. Its function is as follows. Endonuclease that specifically degrades the RNA of RNA-DNA hybrids. This is Ribonuclease HII from Cereibacter sphaeroides (strain ATCC 17025 / ATH 2.4.3) (Rhodobacter sphaeroides).